We begin with the raw amino-acid sequence, 316 residues long: LIM/homeobox protein lim-6 (316 aa).

LIM zinc-binding domains follow at residues 40-101 (KLCS…LYGK) and 102-163 (RCRR…ICNF). A DNA-binding region (homeobox) is located at residues 186–245 (PKRPRTILNAQQRRQFKTAFERSSKPSRKVREQLANETGLSVRVVQVWFQNQRAKIKKLN). The interval 244 to 297 (LNKKDSDSGDTFKHGPGSEGRSTEDIRSSDDEEESVINLDADEVETSETSSYTD) is disordered. The span at 246–256 (KKDSDSGDTFK) shows a compositional bias: basic and acidic residues. Residues 273-289 (DDEEESVINLDADEVET) are compositionally biased toward acidic residues.

Its subcellular location is the nucleus. Transcription factor. Required for the terminal differentiation of sensory- and motor-neurons, especially GABAergic neurons, and for morphological aspects of uterine development. Plays a role in the cell-type-specific regulation of glutamic acid decarboxylase unc-25. Involved in promoting sleep-like behavioral quiescence, acting by modulating expression of transcription factor aptf-1 in the single sleep-active ring interneuron RIS. Plays a role in regulation of RIS differentiation. Required for the functional asymmetry of the ASER and ASEL chemosensory neuron pair, conferring the ability to discriminate sodium from chloride, perhaps by modulating expression of receptor-type guanylate cyclases, such as gcy-5. Involved in regulating postembryonic axon maintenance in the ventral nerve cord, acting in concert with LIM homeobox protein ceh-14, via modulation of expression of immunoglobulin domain zig genes in the interneuron PVT. May play a role in the functions of the excretory gland cell. The polypeptide is LIM/homeobox protein lim-6 (Caenorhabditis elegans).